We begin with the raw amino-acid sequence, 684 residues long: MSSDKLHKVVHEAHDVEARHAPEHFYNSQPGKSYCTDEEHYREMYTQSIEDPAGFFGPLAKEYLDWDRPFTQVQSGSLEHGDIAWFLNGELNASYNCVDRHAFANPDKPALIYEADDESENKVITFGELLRQVSEVAGVLQSWGVKKGDTVAVYLPMIPAAVVAMLAVARLGAIHSVIFAGFSAGSLKERVVDAGCKVVITCDEGKRGGKTVHTKKIVDEGLAGVDSVSKILVFQRTGTQGIPMKPARDFWWHEECVKQRGYLPPVPVNSEDPLFLLYTSGSTGSPKGVVHSTAGYLLGSALTTRFVFDIHPEDVLFTAGDVGWITGHTYALYGPLTLGTATIIFESTPAYPDYGRYWRIIERHRATHFYVAPTALRLIKRVGEEEIAKYDTSSLRVLGSVGEPISPDLWEWYHEKVGKNNCVICDTMWQTESGSHLIAPLAGAVPTKPGSATVPFFGINACIIDPVSGEELKGNDVEGVLAVKSPWPSMARSVWNNHARYFETYLKPYPGYYFTGDGAGRDHDGYYWIRGRVDDVVNVSGHRLSTAEIEAALAEHEGVSEAAVVGITDELTGQAVIAFVSLKDGYLSENAVEGDSTHISPDNLRRELILQVRGEIGPFAAPKTVVVVNDLPKTRSGKIMRRVLRKVASKEADQLGDLSTLANADVVPSIISAVENQFFSQQKK.

Residues arginine 207 to lysine 210 and threonine 326 each bind CoA. Residues glycine 402–proline 404, aspartate 426–threonine 431, aspartate 517, and arginine 532 each bind ATP. Serine 540 serves as a coordination point for CoA. Arginine 543 is a binding site for ATP. Residue arginine 613 coordinates CoA.

Belongs to the ATP-dependent AMP-binding enzyme family.

The enzyme catalyses acetate + ATP + CoA = acetyl-CoA + AMP + diphosphate. This chain is Acetyl-coenzyme A synthetase 2 (ACS2), found in Kluyveromyces lactis (strain ATCC 8585 / CBS 2359 / DSM 70799 / NBRC 1267 / NRRL Y-1140 / WM37) (Yeast).